The primary structure comprises 268 residues: MSSALMPVKTHIVIPARLKSTRLPNKPLLTIHGKPMILWVAEKARLADFADDMCIATDDESIAKICLDAGFDVVMTSSEHASGTDRLAEVAAIKGWAAHDIVVNMQGDEPLVPPLLLEQVKTLLVQDAESVMATLCEPIEDYDTFMRPSVVKVVSQTSNDQQRALYFSRAPIPCNRDVVLTSENSKQPPKNAYRHLGLYAYRVSLLQQFVHCSQTPLEILESLEQLRVLENGGHIAIAKAACSLPAGVDTQEDLDRLNAMSLTDFQDY.

The protein belongs to the KdsB family.

It localises to the cytoplasm. The enzyme catalyses 3-deoxy-alpha-D-manno-oct-2-ulosonate + CTP = CMP-3-deoxy-beta-D-manno-octulosonate + diphosphate. It participates in nucleotide-sugar biosynthesis; CMP-3-deoxy-D-manno-octulosonate biosynthesis; CMP-3-deoxy-D-manno-octulosonate from 3-deoxy-D-manno-octulosonate and CTP: step 1/1. Its pathway is bacterial outer membrane biogenesis; lipopolysaccharide biosynthesis. Functionally, activates KDO (a required 8-carbon sugar) for incorporation into bacterial lipopolysaccharide in Gram-negative bacteria. This is 3-deoxy-manno-octulosonate cytidylyltransferase from Psychrobacter cryohalolentis (strain ATCC BAA-1226 / DSM 17306 / VKM B-2378 / K5).